Consider the following 594-residue polypeptide: Aspartate--tRNA(Asp/Asn) ligase (594 aa).

E173 contributes to the L-aspartate binding site. The tract at residues 197–200 (QLFK) is aspartate. R219 contacts L-aspartate. ATP-binding positions include 219 to 221 (RDE) and Q228. H451 lines the L-aspartate pocket. E485 lines the ATP pocket. R492 serves as a coordination point for L-aspartate. An ATP-binding site is contributed by 537–540 (GWDR). The segment at 566–594 (PLTDAPAPITAQQRKESGIDAQPKRVQQA) is disordered.

The protein belongs to the class-II aminoacyl-tRNA synthetase family. Type 1 subfamily. Homodimer.

The protein resides in the cytoplasm. It carries out the reaction tRNA(Asx) + L-aspartate + ATP = L-aspartyl-tRNA(Asx) + AMP + diphosphate. In terms of biological role, aspartyl-tRNA synthetase with relaxed tRNA specificity since it is able to aspartylate not only its cognate tRNA(Asp) but also tRNA(Asn). Reaction proceeds in two steps: L-aspartate is first activated by ATP to form Asp-AMP and then transferred to the acceptor end of tRNA(Asp/Asn). The polypeptide is Aspartate--tRNA(Asp/Asn) ligase (Mycobacterium tuberculosis (strain CDC 1551 / Oshkosh)).